The primary structure comprises 309 residues: Low density lipoprotein receptor adapter protein 1-A (309 aa).

The region spanning 41–195 is the PID domain; it reads LLEGMLFHLK…SGGEGASSSQ (155 aa). A disordered region spans residues 179–199; the sequence is EKREKSGSGGEGASSSQSDGS. The Clathrin box motif lies at 213 to 217; that stretch reads LLDLE. An AP-2 complex binding region spans residues 250–277; the sequence is WELDDGLDEAFARLAESRTNPQVLDIGL. Residues 258 to 267 carry the [DE]-X(1,2)-F-X-X-[FL]-X-X-X-R motif motif; it reads EAFARLAESR.

As to quaternary structure, interacts (via PID domain) with ldlr (via NPXY motif). Binds to soluble clathrin trimers and to the adapter protein complex 2 (AP-2, beta 2 subunit). Binds to phosphoinositides, which regulate clathrin bud assembly at the cell surface. Interacts with the VLDL receptor (vldlr). Interacts with the vitellogenin receptor. Expressed at high level during oogenesis and embryogenesis. Found in the oocyte vegetal cortex. Found at low level in the adult liver and spleen. Found at very low level in testis and heart.

It is found in the cytoplasm. Its function is as follows. Adapter protein (clathrin-associated sorting protein (CLASP)) required for efficient endocytosis of the LDL receptor (LDLR). Also involved in the vitellogenin receptor mediated endocytosis of nutrients during oogenesis. The sequence is that of Low density lipoprotein receptor adapter protein 1-A from Xenopus laevis (African clawed frog).